A 678-amino-acid chain; its full sequence is ABC transporter G family member 13 (678 aa).

The ABC transporter domain maps to 10–254 (VAWEDLTVVI…FGEAGFPCPS (245 aa)). Residue 48–55 (GPSGSGKS) coordinates ATP. In terms of domain architecture, ABC transmembrane type-2 spans 355 to 567 (KQLRILTQRS…ALQGAYKNEM (213 aa)). The next 6 helical transmembrane spans lie at 374 to 394 (YYWM…SIFF), 409 to 429 (CGGF…QSFI), 446 to 466 (VAVY…LMCL), 490 to 510 (LDLI…ASVV), 513 to 533 (FLMG…SAGF), and 602 to 622 (LDLA…FAIL). At Ser-658 the chain carries Phosphoserine.

This sequence belongs to the ABC transporter superfamily. ABCG family. Eye pigment precursor importer (TC 3.A.1.204) subfamily.

The protein localises to the membrane. The protein is ABC transporter G family member 13 (ABCG13) of Arabidopsis thaliana (Mouse-ear cress).